The following is a 313-amino-acid chain: Olfactory receptor 1D2 (313 aa).

Residues 1–25 (MDGGNQSEGSEFLLLGMSESPEQQR) are Extracellular-facing. Asparagine 5 is a glycosylation site (N-linked (GlcNAc...) asparagine). A helical membrane pass occupies residues 26–49 (ILFWMFLSMYLVTVLGNVLIILAI). Over 50–57 (SSDSRLHT) the chain is Cytoplasmic. A helical transmembrane segment spans residues 58 to 79 (PMYFFLANLSFTDLFFVTNTIP). The Extracellular segment spans residues 80–100 (KMLVNLQSQDKAISYAGCLTQ). A disulfide bond links cysteine 97 and cysteine 189. A helical transmembrane segment spans residues 101 to 120 (LYFLLSLVTLDNLILAVMAY). Residues 121–139 (DRYVAICCPLHYVTAMSPR) are Cytoplasmic-facing. The helical transmembrane segment at 140–158 (LCILLLSLCWVFSVLYGLI) threads the bilayer. Over 159–196 (HTLLMTRVTFCGSRKIHYLFCEMYFLLRLACSNIQINH) the chain is Extracellular. Asparagine 195 carries an N-linked (GlcNAc...) asparagine glycan. The helical transmembrane segment at 197-219 (TVLXATGCFIFLIPLGFMIXSYA) threads the bilayer. Over 220 to 236 (RIVRAILRIPSATGKYK) the chain is Cytoplasmic. Residues 237–259 (AFSTCASHLAVVSLFYGTLGMVY) traverse the membrane as a helical segment. Residues 260 to 271 (LQPLQTYSTKDS) lie on the Extracellular side of the membrane. A helical membrane pass occupies residues 272–291 (VATVMYAVVTPMMNPFIYSL). Residues 292–313 (RNKDIHGALGRLLQGKAFQKLT) are Cytoplasmic-facing.

Belongs to the G-protein coupled receptor 1 family.

Its subcellular location is the cell membrane. Functionally, odorant receptor. This chain is Olfactory receptor 1D2 (OR1D2), found in Pongo pygmaeus (Bornean orangutan).